A 445-amino-acid polypeptide reads, in one-letter code: Histidinol dehydrogenase (445 aa).

NAD(+) contacts are provided by Tyr134, Gln198, and Asn226. Residues Thr249, Gln271, and His274 each contribute to the substrate site. The Zn(2+) site is built by Gln271 and His274. Residues Glu340 and His341 each act as proton acceptor in the active site. His341, Asp374, Glu428, and His433 together coordinate substrate. Asp374 contacts Zn(2+). His433 contacts Zn(2+).

This sequence belongs to the histidinol dehydrogenase family. The cofactor is Zn(2+).

The catalysed reaction is L-histidinol + 2 NAD(+) + H2O = L-histidine + 2 NADH + 3 H(+). Its pathway is amino-acid biosynthesis; L-histidine biosynthesis; L-histidine from 5-phospho-alpha-D-ribose 1-diphosphate: step 9/9. Its function is as follows. Catalyzes the sequential NAD-dependent oxidations of L-histidinol to L-histidinaldehyde and then to L-histidine. In Nocardia farcinica (strain IFM 10152), this protein is Histidinol dehydrogenase.